The sequence spans 648 residues: Fidgetin-like protein 2 (648 aa).

The disordered stretch occupies residues 1 to 36 (MHWTPEHAQPLNQWPEQHLDVSSTTPSPAHKLELPP). Polar residues predominate over residues 10–27 (PLNQWPEQHLDVSSTTPS). Residues Ala-394 and 434-439 (GCGKAL) contribute to the ATP site.

Belongs to the AAA ATPase family. The cofactor is Mg(2+).

The protein resides in the cytoplasm. It localises to the cell cortex. The catalysed reaction is ATP + H2O = ADP + phosphate + H(+). Its function is as follows. Microtubule-severing enzyme that negatively regulates cell migration and wound healing. In migrating cells, targets dynamic microtubules (MTs) at the leading edge and severs them, thereby suppressing motility. Microtubule severing releases ARHGEF2 which activates RHOA, which in turn regulates focal ahesion turnover via focal adhesion kinase, as opposed to F-actin polymerization, to suppress cell motility. Negative regulator of axon regeneration that suppresses axonal growth by selectively severing dynamic MTs in the distal axon shaft and growth cone. Contributes to proper cell branching during endothelial and neuronal development. In Rattus norvegicus (Rat), this protein is Fidgetin-like protein 2 (Fignl2).